The sequence spans 461 residues: MKTTVVYLVILCLIVSCTNGETKHVRKINSDGSEAWGYVEVRPKAHMFWWHYKSPYRVENPSKPWPIILWLQGGPGASGVGIGNFQEVGPLDTFLKPRNSTWLKKADLLFVDSPVGAGYSFVEGNQKDLYVKSDEEAAQDLTKLLQQLFNKNQTLNQSPLFIVAESYGGKIAVKLGLSVIDAVQSGKLKLHLGGVILGDSWISPEDFVFSWGPLLKHVSRLDDNGLDSSNSLAEKIKTQIKNGEYVGATQTWMDLENLISSKSNFVDFYNFLLDTGMDPVSLTTSLKIKKEEKIKKYSRYLNDMRSLSDVEDVEGDLDKLMNGVIKKKLKIIPNDLIWGNNSDDVFTAMEAAFMKPVIEDVDELLATGVDVTIYNGQLDVICSTSGTEAWVHKLRWEGLEEFKKMEREPLFCESDRATRGFTKSYKNLHFYWILGAGHFVPVDEPCVALKMVGEITKSPQL.

The N-terminal stretch at 1 to 20 is a signal peptide; the sequence is MKTTVVYLVILCLIVSCTNG. Residues N99 and N152 are each glycosylated (N-linked (GlcNAc...) asparagine). Residue S166 is part of the active site. Residue N340 is glycosylated (N-linked (GlcNAc...) asparagine). Residues D379 and H438 contribute to the active site.

This sequence belongs to the peptidase S10 family. As to expression, expressed in seedlings, roots, flowers and siliques.

The protein resides in the secreted. In terms of biological role, probable carboxypeptidase. In Arabidopsis thaliana (Mouse-ear cress), this protein is Serine carboxypeptidase-like 51 (SCPL51).